The following is a 294-amino-acid chain: 33 kDa chaperonin (294 aa).

Cystine bridges form between Cys-238–Cys-240 and Cys-271–Cys-274.

It belongs to the HSP33 family. Under oxidizing conditions two disulfide bonds are formed involving the reactive cysteines. Under reducing conditions zinc is bound to the reactive cysteines and the protein is inactive.

The protein localises to the cytoplasm. In terms of biological role, redox regulated molecular chaperone. Protects both thermally unfolding and oxidatively damaged proteins from irreversible aggregation. Plays an important role in the bacterial defense system toward oxidative stress. The polypeptide is 33 kDa chaperonin (Staphylococcus carnosus (strain TM300)).